The chain runs to 837 residues: Striatin-interacting protein 1 (837 aa).

M1 bears the N-acetylmethionine mark. Disordered stretches follow at residues 1–67 and 333–423; these read MEPA…ESPD and AASP…KGLP. Residues 18 to 35 are compositionally biased toward pro residues; it reads PQPPPPPPPATAQPPPGA. Over residues 47–60 the composition is skewed to basic and acidic residues; the sequence is KAREFNRNQRKDSE. S59, S335, and S339 each carry phosphoserine. A compositionally biased stretch (basic and acidic residues) spans 356 to 377; that stretch reads KALIKQDNLDAFNERDPYKADD. The segment covering 378-391 has biased composition (acidic residues); sequence SREEEEENDDDSSL. Position 788 is a phosphoserine (S788). The segment at 796 to 837 is required for STRIPAK core complex formation; it reads DNCLQSVLGQRVDLPEDFQMNYDLWLEREVFSKPISWEELLQ.

It belongs to the STRIP family. As to quaternary structure, part of the core of STRIPAK complexes composed of PP2A catalytic and scaffolding subunits, the striatins (PP2A regulatory subunits), the striatin-associated proteins MOB4, STRIP1 and STRIP2, PDCD10 and members of the STE20 kinases, such as STK24 and STK26. The STRIPAK complex can be extended by adapter proteins such as SLMAP:SIKE1, CTTNBP2 or CTTNBP2NL. Interacts with CDC42BPB. Interacts with CTTNBP2NL.

The protein localises to the cytoplasm. Functionally, plays a role in the regulation of cell morphology and cytoskeletal organization. Required in the cortical actin filament dynamics and cell shape. Part of the striatin-interacting phosphatase and kinase (STRIPAK) complexes. STRIPAK complexes have critical roles in protein (de)phosphorylation and are regulators of multiple signaling pathways including Hippo, MAPK, nuclear receptor and cytoskeleton remodeling. Different types of STRIPAK complexes are involved in a variety of biological processes such as cell growth, differentiation, apoptosis, metabolism and immune regulation. The chain is Striatin-interacting protein 1 (Strip1) from Mus musculus (Mouse).